The sequence spans 329 residues: Strigolactones hydrolase CXE15 (329 aa).

An Involved in the stabilization of the negatively charged intermediate by the formation of the oxyanion hole motif is present at residues 83–85 (HGG). (-)-2'-epi-GR24 is bound by residues Gly85, Gly86, Ser169, and Ser170. The active-site Nucleophile is Ser169. Residues Glu271 and His302 contribute to the active site.

Belongs to the 'GDXG' lipolytic enzyme family. As to expression, expressed in axillary buds, leaves, stems, hypocotyls, flowers, siliques, and vasculatures of shoots and roots.

The protein resides in the nucleus. Its subcellular location is the cytoplasm. The protein localises to the cytosol. The catalysed reaction is (-)-2'-epi-GR24 + H2O = (-)-2'-epi-GR24 ABC-rings + 5-hydroxy-3-methylfuran-2(5H)-one. The enzyme catalyses 5-deoxystrigol + H2O = 5-deoxystrigol ABC-rings + 5-hydroxy-3-methylfuran-2(5H)-one. It catalyses the reaction orobanchol + H2O = orobanchol ABC-rings + 5-hydroxy-3-methylfuran-2(5H)-one. Binds to strigolactones (SLs) such as (-)-2'-epi-GR24(4DO), 5-deoxystrigol (5DS) and orobanchol, and catalyzes their hydrolysis; SL are phytohormones controlling shoot branching and communications between plants and microorganisms. Promotes shoot branching by dampening SL-inhibited axillary bud outgrowth. In Arabidopsis thaliana (Mouse-ear cress), this protein is Strigolactones hydrolase CXE15.